A 78-amino-acid chain; its full sequence is Acyl carrier protein AcpP (78 aa).

The Carrier domain occupies 2 to 77 (SDIAERVKKI…DAVKFIEKAQ (76 aa)). Position 37 is an O-(pantetheine 4'-phosphoryl)serine (Ser37).

Belongs to the acyl carrier protein (ACP) family. Post-translationally, 4'-phosphopantetheine is transferred from CoA to a specific serine of apo-ACP by AcpS. This modification is essential for activity because fatty acids are bound in thioester linkage to the sulfhydryl of the prosthetic group.

It is found in the cytoplasm. It participates in lipid metabolism; fatty acid biosynthesis. In terms of biological role, carrier of the growing fatty acid chain in fatty acid biosynthesis. This Agrobacterium fabrum (strain C58 / ATCC 33970) (Agrobacterium tumefaciens (strain C58)) protein is Acyl carrier protein AcpP.